A 51-amino-acid polypeptide reads, in one-letter code: Large ribosomal subunit protein bL33 (51 aa).

This sequence belongs to the bacterial ribosomal protein bL33 family.

This chain is Large ribosomal subunit protein bL33, found in Francisella philomiragia subsp. philomiragia (strain ATCC 25017 / CCUG 19701 / FSC 153 / O#319-036).